The primary structure comprises 377 residues: Succinyl-diaminopimelate desuccinylase (377 aa).

Residue histidine 67 coordinates Zn(2+). Aspartate 69 is a catalytic residue. Aspartate 100 contacts Zn(2+). The active-site Proton acceptor is the glutamate 134. Residues glutamate 135, glutamate 163, and histidine 349 each coordinate Zn(2+).

It belongs to the peptidase M20A family. DapE subfamily. As to quaternary structure, homodimer. Zn(2+) is required as a cofactor. Requires Co(2+) as cofactor.

It carries out the reaction N-succinyl-(2S,6S)-2,6-diaminopimelate + H2O = (2S,6S)-2,6-diaminopimelate + succinate. It functions in the pathway amino-acid biosynthesis; L-lysine biosynthesis via DAP pathway; LL-2,6-diaminopimelate from (S)-tetrahydrodipicolinate (succinylase route): step 3/3. In terms of biological role, catalyzes the hydrolysis of N-succinyl-L,L-diaminopimelic acid (SDAP), forming succinate and LL-2,6-diaminopimelate (DAP), an intermediate involved in the bacterial biosynthesis of lysine and meso-diaminopimelic acid, an essential component of bacterial cell walls. This Actinobacillus pleuropneumoniae serotype 3 (strain JL03) protein is Succinyl-diaminopimelate desuccinylase.